Consider the following 354-residue polypeptide: S-adenosylmethionine:tRNA ribosyltransferase-isomerase (354 aa).

This sequence belongs to the QueA family. As to quaternary structure, monomer.

The protein resides in the cytoplasm. It catalyses the reaction 7-aminomethyl-7-carbaguanosine(34) in tRNA + S-adenosyl-L-methionine = epoxyqueuosine(34) in tRNA + adenine + L-methionine + 2 H(+). It participates in tRNA modification; tRNA-queuosine biosynthesis. In terms of biological role, transfers and isomerizes the ribose moiety from AdoMet to the 7-aminomethyl group of 7-deazaguanine (preQ1-tRNA) to give epoxyqueuosine (oQ-tRNA). The polypeptide is S-adenosylmethionine:tRNA ribosyltransferase-isomerase (Salmonella dublin (strain CT_02021853)).